Consider the following 330-residue polypeptide: Thioredoxin domain-containing protein 6 (330 aa).

The 105-residue stretch at 11 to 115 folds into the Thioredoxin domain; that stretch reads QVNISTQELW…QKTILDQLEA (105 aa). Positions 157–303 are NDK; that stretch reads ERTCTLAIIK…LFPSLKFSDK (147 aa). The interval 300–330 is disordered; it reads FSDKDTEAPQGGEAEATAGPTEALCFPEDVD. Residues 307–322 are compositionally biased toward low complexity; the sequence is APQGGEAEATAGPTEA.

The protein belongs to the NDK family. In terms of assembly, monomer and homodimer. Detected at very low levels in testis, lung and brain.

The protein localises to the cytoplasm. It is found in the cytoskeleton. Its subcellular location is the cilium axoneme. It localises to the dynein axonemal particle. May be a regulator of microtubule physiology. The chain is Thioredoxin domain-containing protein 6 from Homo sapiens (Human).